Reading from the N-terminus, the 707-residue chain is Acyl-CoA ligase 891, peroxisomal (707 aa).

ATP is bound at residue 259 to 270 (INYTSGTTGPPK). Residues 525 to 549 (DGWFRTGDVCTVDAQGRFIIIDRRK) form a fatty acid-binding region. The Peroxisome targeting signal motif lies at 705 to 707 (AKL).

This sequence belongs to the ATP-dependent AMP-binding enzyme family.

It is found in the peroxisome matrix. The catalysed reaction is (4E,8E)-10-(4-hydroxy-6-methoxy-7-methyl-3-oxo-1,3-dihydro-2-benzofuran-5-yl)-4,8-dimethyldeca-4,8-dienoate + ATP + CoA = (4E,8E)-10-(4-hydroxy-6-methoxy-7-methyl-3-oxo-1,3-dihydro-2-benzofuran-5-yl)-4,8-dimethyldeca-4,8-dienoyl-CoA + AMP + diphosphate. It participates in secondary metabolite biosynthesis; terpenoid biosynthesis. Its function is as follows. Acyl-CoA ligase involved in the biosynthesis of mycophenolic acid (MPA), the first isolated antibiotic natural product in the world obtained from a culture of Penicillium brevicompactum in 1893. The peroxisomal acyl-CoA ligase 891 converts the intermediate MFDHMP-3C into MFDHMP-3C-CoA which impairs its diffusion from the peroxisome. The first step of the pathway is the synthesis of 5-methylorsellinic acid (5MOA) by the cytosolic polyketide synthase mpaC. 5MOA is then converted to the phthalide compound 5,7-dihydroxy-4,6-dimethylphthalide (DHMP) by the endoplasmic reticulum-bound cytochrome P450 monooxygenase mpaDE. MpaDE first catalyzes hydroxylation of 5-MOA to 4,6-dihydroxy-2-(hydroxymethyl)-3-methylbenzoic acid (DHMB). MpaDE then acts as a lactone synthase that catalyzes the ring closure to convert DHMB into DHMP. The next step is the prenylation of DHMP by the Golgi apparatus-associated prenyltransferase mpaA to yield farnesyl-DHMP (FDHMP). The ER-bound oxygenase mpaB then mediates the oxidative cleavage the C19-C20 double bond in FDHMP to yield FDHMP-3C via a mycophenolic aldehyde intermediate. The O-methyltransferase mpaG catalyzes the methylation of FDHMP-3C to yield MFDHMP-3C. After the cytosolic methylation of FDHMP-3C, MFDHMP-3C enters into peroxisomes probably via free diffusion due to its low molecular weight. Upon a peroxisomal CoA ligation reaction, catalyzed by a beta-oxidation component enzyme acyl-CoA ligase ACL891, MFDHMP-3C-CoA would then be restricted to peroxisomes for the following beta-oxidation pathway steps. The peroxisomal beta-oxidation machinery than converts MFDHMP-3C-CoA into MPA_CoA, via a beta-oxidation chain-shortening process. Finally mpaH acts as a peroxisomal acyl-CoA hydrolase with high substrate specificity toward MPA-CoA to release the final product MPA. The polypeptide is Acyl-CoA ligase 891, peroxisomal (Penicillium brevicompactum).